The sequence spans 295 residues: Malonyl-[acyl-carrier protein] O-methyltransferase (295 aa).

It belongs to the methyltransferase superfamily.

It catalyses the reaction malonyl-[ACP] + S-adenosyl-L-methionine = malonyl-[ACP] methyl ester + S-adenosyl-L-homocysteine. It participates in cofactor biosynthesis; biotin biosynthesis. Functionally, converts the free carboxyl group of a malonyl-thioester to its methyl ester by transfer of a methyl group from S-adenosyl-L-methionine (SAM). It allows to synthesize pimeloyl-ACP via the fatty acid synthetic pathway. In Xylella fastidiosa (strain M23), this protein is Malonyl-[acyl-carrier protein] O-methyltransferase.